The sequence spans 239 residues: Increased recombination centers protein 22-1 (239 aa).

Residues 1-19 (MKLSTIFTAFAATIATVAG) form the signal peptide. The Lumenal segment spans residues 20-161 (YETTGSKQTV…AAVSFFDPRL (142 aa)). The chain crosses the membrane as a helical span at residues 162 to 182 (IFLELVLLITFAGLIYVGYEI). The Cytoplasmic portion of the chain corresponds to 183–239 (WGKQYFKGVASVKAKKVSAAKASSPVASGPSTTSATGYDTNWIPESHLKQKKTKKVN). A compositionally biased stretch (low complexity) spans 201 to 213 (AAKASSPVASGPS). The segment at 201–222 (AAKASSPVASGPSTTSATGYDT) is disordered.

This sequence belongs to the IRC22 family.

It localises to the endoplasmic reticulum membrane. Its function is as follows. Is probably involved in a pathway contributing to genomic integrity. The protein is Increased recombination centers protein 22-1 (IRC22-1) of Candida albicans (strain WO-1) (Yeast).